Consider the following 226-residue polypeptide: 2-C-methyl-D-erythritol 4-phosphate cytidylyltransferase (226 aa).

This sequence belongs to the IspD/TarI cytidylyltransferase family. IspD subfamily.

The enzyme catalyses 2-C-methyl-D-erythritol 4-phosphate + CTP + H(+) = 4-CDP-2-C-methyl-D-erythritol + diphosphate. Its pathway is isoprenoid biosynthesis; isopentenyl diphosphate biosynthesis via DXP pathway; isopentenyl diphosphate from 1-deoxy-D-xylulose 5-phosphate: step 2/6. Catalyzes the formation of 4-diphosphocytidyl-2-C-methyl-D-erythritol from CTP and 2-C-methyl-D-erythritol 4-phosphate (MEP). The protein is 2-C-methyl-D-erythritol 4-phosphate cytidylyltransferase of Clostridium beijerinckii (strain ATCC 51743 / NCIMB 8052) (Clostridium acetobutylicum).